The sequence spans 348 residues: GTP 3',8-cyclase (348 aa).

Residues 24-248 (PFGRAVTYLR…TDIDYQTGGP (225 aa)) form the Radical SAM core domain. Arg-33 is a binding site for GTP. [4Fe-4S] cluster-binding residues include Cys-40 and Cys-44. Tyr-46 lines the S-adenosyl-L-methionine pocket. Cys-47 is a binding site for [4Fe-4S] cluster. GTP is bound at residue Arg-82. Gly-86 is a binding site for S-adenosyl-L-methionine. GTP is bound at residue Thr-115. Ser-139 serves as a coordination point for S-adenosyl-L-methionine. GTP is bound at residue Lys-175. Position 209 (Met-209) interacts with S-adenosyl-L-methionine. 2 residues coordinate [4Fe-4S] cluster: Cys-272 and Cys-275. 277-279 (RVR) serves as a coordination point for GTP. Cys-289 contributes to the [4Fe-4S] cluster binding site.

It belongs to the radical SAM superfamily. MoaA family. Monomer and homodimer. It depends on [4Fe-4S] cluster as a cofactor.

The catalysed reaction is GTP + AH2 + S-adenosyl-L-methionine = (8S)-3',8-cyclo-7,8-dihydroguanosine 5'-triphosphate + 5'-deoxyadenosine + L-methionine + A + H(+). Its pathway is cofactor biosynthesis; molybdopterin biosynthesis. Functionally, catalyzes the cyclization of GTP to (8S)-3',8-cyclo-7,8-dihydroguanosine 5'-triphosphate. The sequence is that of GTP 3',8-cyclase from Rhizobium etli (strain ATCC 51251 / DSM 11541 / JCM 21823 / NBRC 15573 / CFN 42).